Here is a 105-residue protein sequence, read N- to C-terminus: Diuretic hormone class 2 (105 aa).

Positions 1–23 (MTVLCTLMAFVMVVAISSLTVDA) are cleaved as a signal peptide. A propeptide spanning residues 24-63 (IPHSHESYWDQQDDIDRDEFLELLSRLSRTVMNRPEMENS) is cleaved from the precursor. Pro96 carries the proline amide modification. A propeptide spanning residues 101–105 (RSEQA) is cleaved from the precursor.

Expressed in central brain, antennal lobes, retrocerebral complex and gnathal, thoracic and abdominal ganglia but not in optical lobes (at protein level).

It localises to the secreted. Functionally, regulation of fluid secretion. Stimulates Malpighian tubules fluid secretion. In Camponotus floridanus (Florida carpenter ant), this protein is Diuretic hormone class 2.